The chain runs to 273 residues: Translation initiation factor 2 subunit alpha (273 aa).

Residues 12–83 enclose the S1 motif domain; it reads GEFVVATVKN…EKGHIDLSLK (72 aa).

The protein belongs to the eIF-2-alpha family. As to quaternary structure, heterotrimer composed of an alpha, a beta and a gamma chain.

Its function is as follows. eIF-2 functions in the early steps of protein synthesis by forming a ternary complex with GTP and initiator tRNA. The chain is Translation initiation factor 2 subunit alpha from Thermococcus gammatolerans (strain DSM 15229 / JCM 11827 / EJ3).